Reading from the N-terminus, the 441-residue chain is Glutamyl-tRNA reductase (441 aa).

Residues 58-61, serine 116, 121-123, and glutamine 127 contribute to the substrate site; these read TCNR and EPD. Catalysis depends on cysteine 59, which acts as the Nucleophile. 195 to 200 is a binding site for NADP(+); it reads GAGMAG.

The protein belongs to the glutamyl-tRNA reductase family. Homodimer.

It carries out the reaction (S)-4-amino-5-oxopentanoate + tRNA(Glu) + NADP(+) = L-glutamyl-tRNA(Glu) + NADPH + H(+). The protein operates within porphyrin-containing compound metabolism; protoporphyrin-IX biosynthesis; 5-aminolevulinate from L-glutamyl-tRNA(Glu): step 1/2. Its function is as follows. Catalyzes the NADPH-dependent reduction of glutamyl-tRNA(Glu) to glutamate 1-semialdehyde (GSA). The chain is Glutamyl-tRNA reductase from Ignicoccus hospitalis (strain KIN4/I / DSM 18386 / JCM 14125).